Consider the following 113-residue polypeptide: Gonadotropin subunit beta (113 aa).

Disulfide bonds link Cys6-Cys54, Cys20-Cys69, Cys23-Cys107, Cys31-Cys85, Cys35-Cys87, and Cys90-Cys97. The N-linked (GlcNAc...) asparagine glycan is linked to Asn10.

Belongs to the glycoprotein hormones subunit beta family. Heterodimer of an alpha and a beta chain.

It is found in the secreted. Functionally, involved in gametogenesis and steroidogenesis. This is Gonadotropin subunit beta (cgb) from Muraenesox cinereus (Daggertooth pike conger).